Consider the following 97-residue polypeptide: Theromacin (97 aa).

An N-terminal signal peptide occupies residues 1–22 (MELKSGLSILLCFGICIAVINA). 5 cysteine pairs are disulfide-bonded: Cys24–Cys31, Cys46–Cys50, Cys53–Cys95, Cys61–Cys69, and Cys79–Cys81.

Coelomic liquid (at protein level). Expressed in large fat cells in contact with coelomic cavities, in intestinal epithelia and at the epidermis level.

Its subcellular location is the secreted. Functionally, has a bactericidal activity. Active against M.luteus. No activity toward E.coli and F.oxysporum. This chain is Theromacin, found in Theromyzon tessulatum (Duck leech).